The sequence spans 259 residues: Probable UMP-CMP kinase 2 (259 aa).

ATP is bound at residue 63–68; that stretch reads GSGKGT. The tract at residues 83-112 is NMP; it reads SAGDLLRREIAMHTENGAMILNLIKDGKIV. A ribonucleoside 5'-phosphate contacts are provided by residues arginine 89, 110 to 112, and 137 to 140; these read KIV and GFPR. Asparagine 144 is a binding site for CMP. The LID stretch occupies residues 175–183; the sequence is NRNQGRIDD. An ATP-binding site is contributed by arginine 176. 2 residues coordinate a ribonucleoside 5'-phosphate: arginine 180 and arginine 191. Glycine 219 lines the ATP pocket.

The protein belongs to the adenylate kinase family. UMP-CMP kinase subfamily. Monomer. Mg(2+) serves as cofactor.

The protein localises to the cytoplasm. The protein resides in the nucleus. The catalysed reaction is CMP + ATP = CDP + ADP. It catalyses the reaction dCMP + ATP = dCDP + ADP. It carries out the reaction UMP + ATP = UDP + ADP. In terms of biological role, catalyzes the phosphorylation of pyrimidine nucleoside monophosphates at the expense of ATP. Plays an important role in de novo pyrimidine nucleotide biosynthesis. Has preference for UMP and CMP as phosphate acceptors. This Arabidopsis thaliana (Mouse-ear cress) protein is Probable UMP-CMP kinase 2 (UMK2).